Consider the following 1375-residue polypeptide: DNA-directed RNA polymerase subunit beta (1375 aa).

The protein belongs to the RNA polymerase beta chain family. The RNAP catalytic core consists of 2 alpha, 1 beta, 1 beta' and 1 omega subunit. When a sigma factor is associated with the core the holoenzyme is formed, which can initiate transcription.

The catalysed reaction is RNA(n) + a ribonucleoside 5'-triphosphate = RNA(n+1) + diphosphate. DNA-dependent RNA polymerase catalyzes the transcription of DNA into RNA using the four ribonucleoside triphosphates as substrates. In Campylobacter jejuni subsp. jejuni serotype O:6 (strain 81116 / NCTC 11828), this protein is DNA-directed RNA polymerase subunit beta.